Here is a 535-residue protein sequence, read N- to C-terminus: Xylan 1,3-beta-xylosidase (535 aa).

Asp16 functions as the Proton acceptor in the catalytic mechanism. The active-site Proton donor is the Glu189.

This sequence belongs to the glycosyl hydrolase 43 family.

The catalysed reaction is Hydrolysis of successive xylose residues from the non-reducing termini of (1-&gt;3)-beta-D-xylans.. Its activity is regulated as follows. Inhibited by Ag(+), Cu(2+), Hg(2+), Mn(2+), Pb(2+), Zn(2+) and p-chloromercuric benzoic acid. Its function is as follows. Beta-1,3-xylosidase that hydrolyzes beta-1,3-xylooligosaccharides to D-xylose. The protein is Xylan 1,3-beta-xylosidase (xloA) of Vibrio sp.